We begin with the raw amino-acid sequence, 279 residues long: Four and a half LIM domains protein 2 (279 aa).

The C4-type zinc finger occupies 7-31; the sequence is CHHCEDSLFGRKYVLREEQPYCVAC. LIM zinc-binding domains are found at residues 40–92, 101–153, and 162–212; these read CEEC…CTDC, CQEC…CVPC, and CVQC…CLGC. A Glycyl lysine isopeptide (Lys-Gly) (interchain with G-Cter in SUMO2) cross-link involves residue Lys-78. Residues Lys-167 and Lys-220 each participate in a glycyl lysine isopeptide (Lys-Gly) (interchain with G-Cter in SUMO2) cross-link. The region spanning 221–275 is the LIM zinc-binding 4 domain; it reads CAGCANPISGLGGTKYISFEERQWHNDCFNCKKCSLSLVGRGFLTERDDILCPDC. Ser-238 is modified (phosphoserine).

In terms of assembly, interacts with ZNF638 and TTN/titin. Interacts with E4F1. Interacts with GRB7. Interacts with SIRT1 and FOXO1. Interacts with CEFIP and calcineurin. Interacts with FOXK1.

The protein localises to the cytoplasm. Its subcellular location is the nucleus. The protein resides in the myofibril. It is found in the sarcomere. It localises to the z line. May function as a molecular transmitter linking various signaling pathways to transcriptional regulation. Negatively regulates the transcriptional repressor E4F1 and may function in cell growth. Inhibits the transcriptional activity of FOXO1 and its apoptotic function by enhancing the interaction of FOXO1 with SIRT1 and FOXO1 deacetylation. Negatively regulates the calcineurin/NFAT signaling pathway in cardiomyocytes. This chain is Four and a half LIM domains protein 2 (FHL2), found in Bos taurus (Bovine).